A 442-amino-acid chain; its full sequence is C4-dicarboxylate transport protein 4 (442 aa).

Helical transmembrane passes span 20 to 40 (ILYVQVLIAIVLGVLIGYFYP), 53 to 73 (FIALIKMMIAPVIFCTVVHGI), 90 to 110 (LIYFESVSTVALAVGLLVGEV), 160 to 180 (GDLLQVLLISILSGFAIAFLG), 209 to 229 (PVGAFGAMAFTVGAYGLGSLL), and 233 to 253 (ALIGTFYLTSILFVLIVLGAI).

It belongs to the dicarboxylate/amino acid:cation symporter (DAACS) (TC 2.A.23) family.

It localises to the cell inner membrane. Responsible for the transport of dicarboxylates such as succinate, fumarate, and malate from the periplasm across the membrane. The polypeptide is C4-dicarboxylate transport protein 4 (Bradyrhizobium diazoefficiens (strain JCM 10833 / BCRC 13528 / IAM 13628 / NBRC 14792 / USDA 110)).